The sequence spans 142 residues: Large ribosomal subunit protein uL11 (142 aa).

This sequence belongs to the universal ribosomal protein uL11 family. In terms of assembly, part of the ribosomal stalk of the 50S ribosomal subunit. Interacts with L10 and the large rRNA to form the base of the stalk. L10 forms an elongated spine to which L12 dimers bind in a sequential fashion forming a multimeric L10(L12)X complex. Post-translationally, one or more lysine residues are methylated.

Forms part of the ribosomal stalk which helps the ribosome interact with GTP-bound translation factors. In Buchnera aphidicola subsp. Acyrthosiphon pisum (strain APS) (Acyrthosiphon pisum symbiotic bacterium), this protein is Large ribosomal subunit protein uL11.